Reading from the N-terminus, the 219-residue chain is Dual specificity phosphatase 29 (219 aa).

A Tyrosine-protein phosphatase domain is found at 53-201 (HVNEVWPKLY…LRELDRQLVQ (149 aa)). 145 to 152 (HCVMGRSR) serves as a coordination point for substrate. Residue C146 is the Phosphocysteine intermediate of the active site.

It belongs to the protein-tyrosine phosphatase family. Non-receptor class dual specificity subfamily. In terms of assembly, homodimer. Interacts with PRKAA2.

It is found in the cytoplasm. The protein resides in the nucleus. The enzyme catalyses O-phospho-L-tyrosyl-[protein] + H2O = L-tyrosyl-[protein] + phosphate. It catalyses the reaction O-phospho-L-seryl-[protein] + H2O = L-seryl-[protein] + phosphate. The catalysed reaction is O-phospho-L-threonyl-[protein] + H2O = L-threonyl-[protein] + phosphate. Functionally, dual specificity phosphatase able to dephosphorylate phosphotyrosine, phosphoserine and phosphothreonine residues within the same substrate, with a preference for phosphotyrosine as a substrate. Involved in the modulation of intracellular signaling cascades. May regulate glucose metabolism by activating, AMPK, an energy sensor protein kinase. Affects MAP kinase signaling though modulation of the ERK1/2 cascade in skeletal muscle promoting muscle cell differentiation, development and atrophy. The polypeptide is Dual specificity phosphatase 29 (DUSP29) (Bos taurus (Bovine)).